The following is a 305-amino-acid chain: MKKIIFMGTPSYATCILKALVENENFKLVALFTQPDKAVGRKQILTPSDTKAFLSQNYPSIPIFTPSSLKDKNIIREIKDLNPDFIVVAAYGKILPKAILDLAPCVNLHASLLPKYRGASPIQSAILNKDEKSGVCTMLMEEGLDTGAILESLECDIKDKNSSEVFELLANLAAKIILSTLLNFDKITPKKQEESLATLCRKIKKEDGLINLQNARELYQKYLAFTPWPGVFLENGLKFLELELVDELKQNAKMGEILELEKESFLLACKQGVLRIKKLQESGKKALDGRTYLNGKRLKSEDSLC.

111-114 (SLLP) serves as a coordination point for (6S)-5,6,7,8-tetrahydrofolate.

Belongs to the Fmt family.

It carries out the reaction L-methionyl-tRNA(fMet) + (6R)-10-formyltetrahydrofolate = N-formyl-L-methionyl-tRNA(fMet) + (6S)-5,6,7,8-tetrahydrofolate + H(+). Functionally, attaches a formyl group to the free amino group of methionyl-tRNA(fMet). The formyl group appears to play a dual role in the initiator identity of N-formylmethionyl-tRNA by promoting its recognition by IF2 and preventing the misappropriation of this tRNA by the elongation apparatus. In Campylobacter jejuni subsp. jejuni serotype O:2 (strain ATCC 700819 / NCTC 11168), this protein is Methionyl-tRNA formyltransferase.